The sequence spans 447 residues: Glucose-6-phosphate isomerase (447 aa).

Residue Glu-288 is the Proton donor of the active site. Catalysis depends on residues His-309 and Lys-423.

This sequence belongs to the GPI family.

It localises to the cytoplasm. The enzyme catalyses alpha-D-glucose 6-phosphate = beta-D-fructose 6-phosphate. It participates in carbohydrate biosynthesis; gluconeogenesis. It functions in the pathway carbohydrate degradation; glycolysis; D-glyceraldehyde 3-phosphate and glycerone phosphate from D-glucose: step 2/4. Its function is as follows. Catalyzes the reversible isomerization of glucose-6-phosphate to fructose-6-phosphate. The protein is Glucose-6-phosphate isomerase of Lactobacillus johnsonii (strain CNCM I-12250 / La1 / NCC 533).